Consider the following 1411-residue polypeptide: ACSSPEVSIFHFFVYAGSFVKNFKKMKGSSAISKREMSRADQCKLLAYTAVGYETVGNVAADIASIEGANLVAAPVAAGGHLGKGLTDAAMIAMDCSSIPFEEIKEILNKEFKEMGRKLDKNTEALEHVSKLVSKTLSTVEKIRVEMREGFKLVIETIENIATKEIVFDINKIVQYFNNERENINSRQKEEFVAKLQEPAPGNFLLYLRNSRTSESGTLYSLLFRIIDQELAIPNNAGDNNAIQALYALFYGTETFISIMFYLVKQYSYLAEYHYQKGNLEEFNTNFDHMKIVFQDFKFSLIGINQNTKPLVDEVLNVLNNVKNKSFIRNVQNKLFYDLMKQTESLLELKKEIANMELPIIDETPRLSISISFKERSDDKPVDTPLLKWDKGKEVKYAIQFEQDGKFSKISSWSKPVTVQHLACPFISVDKDRRNRLIFRQFGDQIPELVGTLRGSQVEFRDIHRDLYNAAQVPYAREALSISRTLIQNGANVSETFELGRGAIHAAASAGNYDVGELLLNKDINLLEKADKNGYTPLHIAADSNKNDFVMFLIGNNADVNVRTKSDLFTPLHLAARRDLTDVTQTLIDITEIDLNAQDKSGFTPLHLSISSTSETAAILIRNTNAVINIKSKVGLTPLHLATLQNNLSVSKLLAGKGAYLNDGDANGMTPLHYAAMTGNLEMVDFLLNQQYININAATKEKKWTPLHLAILFKKNDVAERLLSDENLNIRLETNGGINPLHLASATGNKQLVIELLAKNADVTRLTSKGFSALHLGIIGKNEEIPFFLVEKGANVNDKTNSGVTPLHFAAGLGKANIFRLLLSRGADIKAEDINSQMPIHEAVSNGHLEIVRILIEKDPSLMNVKNIRNEYPFYLAVEKRYKDIFDYFVSKDANVNEVDHNGNTLLHLFSSTGELEVVQFLMQNGANFRLKNNERKTFFDLAIENGRLNIVAFAVEKNKVNLQAAHRGKTILYHAICDSAKYDKIEIVKYFIEKLNESECNPLHEAAAYAHLDLVKYFVQERGINPAEFNEENQASPFCITIHGAPCGYSLDCDTPDRLEVVEYLSDKIPDINGKCDVQENTPITVAIFANKVSILNYLVGIGADPNQQVDGDPPLYIAARQGRFEIVRCLIEVHKVDINTRNKERFTALHAAARNDFMDVVKYLVRQGADVNAKGIDDLRPIDIAGEKAKAYLQSSRFLRSGHSFQSNEIDSFGNTIHGISMSARTNDKLTQQISSKGTRSDSNSTEGKMHSENVHVRSIDVNGALLLLDFMIRVFASKKTNFAPYGSRIKTRSAAEAQAEALIMTERFENLLSGLIGDPIPDSIDFSNVHSKIYKAIMSGRRSVISEMLCSFAEEYSKLNHESIKQLLSEFETLTTTKASEIHIEESVPYAPFEICELKVNSNVSQIK.

A propeptide spanning residues 1 to 35 is cleaved from the precursor; it reads ACSSPEVSIFHFFVYAGSFVKNFKKMKGSSAISKR. A helix H8 is the probable transmembrane region of the tetrameric pore inserted in the target cell membrane region spans residues 245 to 264; it reads ALYALFYGTETFISIMFYLV. ANK repeat units follow at residues 462 to 495, 499 to 528, 533 to 562, 567 to 597, 601 to 630, 634 to 663, 667 to 697, 702 to 732, 736 to 765, 769 to 798, 802 to 831, 835 to 864, 869 to 898, 902 to 931, 935 to 965, 968 to 999, 1000 to 1029, 1080 to 1109, 1112 to 1142, and 1146 to 1175; these read DIHRDLYNAAQVPYAREALSISRTLIQNGANVSE, LGRGAIHAAASAGNYDVGELLLNKDINLLE, NGYTPLHIAADSNKNDFVMFLIGNNADVNV, DLFTPLHLAARRDLTDVTQTLIDITEIDLNA, SGFTPLHLSISSTSETAAILIRNTNAVINI, VGLTPLHLATLQNNLSVSKLLAGKGAYLND, NGMTPLHYAAMTGNLEMVDFLLNQQYININA, KKWTPLHLAILFKKNDVAERLLSDENLNIRL, GGINPLHLASATGNKQLVIELLAKNADVTR, KGFSALHLGIIGKNEEIPFFLVEKGANVND, SGVTPLHFAAGLGKANIFRLLLSRGADIKA, NSQMPIHEAVSNGHLEIVRILIEKDPSLMN, RNEYPFYLAVEKRYKDIFDYFVSKDANVNE, NGNTLLHLFSSTGELEVVQFLMQNGANFRL, ERKTFFDLAIENGRLNIVAFAVEKNKVNLQA, RGKTILYHAICDSAKYDKIEIVKYFIEKLNES, ECNPLHEAAAYAHLDLVKYFVQERGINPAE, QENTPITVAIFANKVSILNYLVGIGADPNQ, DGDPPLYIAARQGRFEIVRCLIEVHKVDINT, and ERFTALHAAARNDFMDVVKYLVRQGADVNA. Positions 1196–1411 are excised as a propeptide; sequence QSSRFLRSGH…KVNSNVSQIK (216 aa). The span at 1230-1249 shows a compositional bias: polar residues; the sequence is DKLTQQISSKGTRSDSNSTE. The interval 1230 to 1254 is disordered; sequence DKLTQQISSKGTRSDSNSTEGKMHS. One copy of the ANK 21 repeat lies at 1331–1361; that stretch reads NVHSKIYKAIMSGRRSVISEMLCSFAEEYSK.

Belongs to the cationic peptide 01 (latrotoxin) family. 02 (alpha-latroinsectotoxin) subfamily. As to quaternary structure, homotetramer in membranes. Expressed by the venom gland.

The protein localises to the secreted. Its subcellular location is the target cell membrane. In terms of biological role, insecticidal presynaptic neurotoxin that induces massive neurotransmitter release at insect (but not vertebrate) neuromuscular junctions. Native toxin forms cation-permeable pores (with high permeability to calcium) in lipid membranes locust muscle membrane and artificial lipid bilayers. May bind to insect neurexin-1 homolog, insect adhesion G protein-coupled receptor L1 homolog, and insect receptor-type tyrosine-protein phosphatase S homolog, and induces neurotransmitter exocytosis both by forming tetrameric pores in membranes and signaling via G protein-coupled receptor. Oligomerization is a process independent of divalent cations. The toxin forms channels with 0.55-0.58 nm entrance diameter and a relatively small conductance in planar phospholipid membranes. The sequence is that of Alpha-latroinsectotoxin-Lt1a from Latrodectus tredecimguttatus (Mediterranean black widow spider).